The following is a 397-amino-acid chain: Elongation factor Tu-1 (397 aa).

One can recognise a tr-type G domain in the interval Lys-10–Glu-206. Residues Gly-19–Thr-26 form a G1 region. Position 19 to 26 (Gly-19 to Thr-26) interacts with GTP. Residue Thr-26 participates in Mg(2+) binding. The interval Gly-62 to Ser-66 is G2. The G3 stretch occupies residues Asp-83–Gly-86. GTP contacts are provided by residues Asp-83 to His-87 and Asn-138 to Asp-141. The segment at Asn-138–Asp-141 is G4. A G5 region spans residues Ser-176–Leu-178.

Belongs to the TRAFAC class translation factor GTPase superfamily. Classic translation factor GTPase family. EF-Tu/EF-1A subfamily. As to quaternary structure, monomer.

The protein resides in the cytoplasm. It carries out the reaction GTP + H2O = GDP + phosphate + H(+). In terms of biological role, GTP hydrolase that promotes the GTP-dependent binding of aminoacyl-tRNA to the A-site of ribosomes during protein biosynthesis. This is Elongation factor Tu-1 from Streptomyces coelicolor (strain ATCC BAA-471 / A3(2) / M145).